We begin with the raw amino-acid sequence, 506 residues long: Cysteine--tRNA ligase (506 aa).

Cysteine 34 contacts Zn(2+). Positions 36–46 (PTVYDFAHIGN) match the 'HIGH' region motif. Positions 230, 269, and 273 each coordinate Zn(2+). Positions 302-306 (KMSKS) match the 'KMSKS' region motif. Lysine 305 is a binding site for ATP.

Belongs to the class-I aminoacyl-tRNA synthetase family. Monomer. Zn(2+) serves as cofactor.

Its subcellular location is the cytoplasm. The enzyme catalyses tRNA(Cys) + L-cysteine + ATP = L-cysteinyl-tRNA(Cys) + AMP + diphosphate. In Brucella ovis (strain ATCC 25840 / 63/290 / NCTC 10512), this protein is Cysteine--tRNA ligase.